The following is a 234-amino-acid chain: 1-(5-phosphoribosyl)-5-[(5-phosphoribosylamino)methylideneamino] imidazole-4-carboxamide isomerase (234 aa).

Asp9 (proton acceptor) is an active-site residue. Asp131 acts as the Proton donor in catalysis.

Belongs to the HisA/HisF family.

It is found in the cytoplasm. It catalyses the reaction 1-(5-phospho-beta-D-ribosyl)-5-[(5-phospho-beta-D-ribosylamino)methylideneamino]imidazole-4-carboxamide = 5-[(5-phospho-1-deoxy-D-ribulos-1-ylimino)methylamino]-1-(5-phospho-beta-D-ribosyl)imidazole-4-carboxamide. Its pathway is amino-acid biosynthesis; L-histidine biosynthesis; L-histidine from 5-phospho-alpha-D-ribose 1-diphosphate: step 4/9. This Staphylococcus aureus (strain MRSA252) protein is 1-(5-phosphoribosyl)-5-[(5-phosphoribosylamino)methylideneamino] imidazole-4-carboxamide isomerase.